Consider the following 262-residue polypeptide: Zinc-finger homeodomain protein 6 (262 aa).

Basic and acidic residues-rich tracts occupy residues 1-25 and 36-47; these read MEVR…DHHR and NKEKPTTKRNGS. Residues 1-93 form a disordered region; it reads MEVREKKDEK…ECQKNHAASS (93 aa). Residues 82-131 form a ZF-HD dimerization-type; degenerate zinc finger; the sequence is YRECQKNHAASSGGHVVDGCGEFMSSGEEGTVESLLCAACDCHRSFHRKE. Residues 198 to 261 constitute a DNA-binding region (homeobox); that stretch reads KKRFRTKFNE…NNKQAAKKKD (64 aa).

Homo- and heterodimer with other ZFHD proteins. Interacts with MIF1 and MIF3; these interactions prevent nuclear localization and DNA-binding to inhibit transcription regulation activity. Binds to ZHD1, ZHD2, ZHD10 and ZHD11. As to expression, expressed in seedlings, roots, leaves, stems, flowers and inflorescence.

The protein localises to the nucleus. Its function is as follows. Putative transcription factor. This Arabidopsis thaliana (Mouse-ear cress) protein is Zinc-finger homeodomain protein 6 (ZHD6).